Reading from the N-terminus, the 210-residue chain is Large ribosomal subunit protein bL25 (210 aa).

The segment at 191–210 (KPAPKAAETDEDGEEAASEE) is disordered. A compositionally biased stretch (acidic residues) spans 199 to 210 (TDEDGEEAASEE).

This sequence belongs to the bacterial ribosomal protein bL25 family. CTC subfamily. In terms of assembly, part of the 50S ribosomal subunit; part of the 5S rRNA/L5/L18/L25 subcomplex. Contacts the 5S rRNA. Binds to the 5S rRNA independently of L5 and L18.

In terms of biological role, this is one of the proteins that binds to the 5S RNA in the ribosome where it forms part of the central protuberance. The sequence is that of Large ribosomal subunit protein bL25 from Alteromonas mediterranea (strain DSM 17117 / CIP 110805 / LMG 28347 / Deep ecotype).